A 362-amino-acid polypeptide reads, in one-letter code: Heme A synthase (362 aa).

5 helical membrane passes run 12–32 (AVKIWLGAIAALIAAMVLVGG), 102–122 (VIGLAYLLPFLWFIWRGHLGG), 128–148 (LWLIFGLGALQGAVGWWMVAS), 159–179 (ERLAIHLTLALVIFAAIVWTL), and 198–218 (AAALLALTFVQIFFGALVAGL). His-262 serves as a coordination point for heme. Helical transmembrane passes span 264 to 286 (MLAYALWALAIAHAIDAVRARAG), 291 to 311 (GAVWFAAALTLQAALGIFTLL), and 314 to 334 (VPIGLALAHQAVAVLVLMLGV). His-322 lines the heme pocket.

It belongs to the COX15/CtaA family. Type 2 subfamily. In terms of assembly, interacts with CtaB. Heme b serves as cofactor.

The protein resides in the cell membrane. It catalyses the reaction Fe(II)-heme o + 2 A + H2O = Fe(II)-heme a + 2 AH2. It participates in porphyrin-containing compound metabolism; heme A biosynthesis; heme A from heme O: step 1/1. In terms of biological role, catalyzes the conversion of heme O to heme A by two successive hydroxylations of the methyl group at C8. The first hydroxylation forms heme I, the second hydroxylation results in an unstable dihydroxymethyl group, which spontaneously dehydrates, resulting in the formyl group of heme A. This chain is Heme A synthase, found in Rhodopseudomonas palustris (strain BisA53).